A 287-amino-acid chain; its full sequence is tRNA-cytidine(32) 2-sulfurtransferase (287 aa).

The PP-loop motif motif lies at 58–63 (SGGKDS). [4Fe-4S] cluster-binding residues include Cys-133, Cys-136, and Cys-224.

This sequence belongs to the TtcA family. Homodimer. Mg(2+) serves as cofactor. The cofactor is [4Fe-4S] cluster.

The protein resides in the cytoplasm. It carries out the reaction cytidine(32) in tRNA + S-sulfanyl-L-cysteinyl-[cysteine desulfurase] + AH2 + ATP = 2-thiocytidine(32) in tRNA + L-cysteinyl-[cysteine desulfurase] + A + AMP + diphosphate + H(+). Its pathway is tRNA modification. Its function is as follows. Catalyzes the ATP-dependent 2-thiolation of cytidine in position 32 of tRNA, to form 2-thiocytidine (s(2)C32). The sulfur atoms are provided by the cysteine/cysteine desulfurase (IscS) system. In Dinoroseobacter shibae (strain DSM 16493 / NCIMB 14021 / DFL 12), this protein is tRNA-cytidine(32) 2-sulfurtransferase.